Here is a 474-residue protein sequence, read N- to C-terminus: Probable glycine dehydrogenase (decarboxylating) subunit 2 (474 aa).

N6-(pyridoxal phosphate)lysine is present on Lys-266.

The protein belongs to the GcvP family. C-terminal subunit subfamily. As to quaternary structure, the glycine cleavage system is composed of four proteins: P, T, L and H. In this organism, the P 'protein' is a heterodimer of two subunits. Pyridoxal 5'-phosphate serves as cofactor.

The enzyme catalyses N(6)-[(R)-lipoyl]-L-lysyl-[glycine-cleavage complex H protein] + glycine + H(+) = N(6)-[(R)-S(8)-aminomethyldihydrolipoyl]-L-lysyl-[glycine-cleavage complex H protein] + CO2. In terms of biological role, the glycine cleavage system catalyzes the degradation of glycine. The P protein binds the alpha-amino group of glycine through its pyridoxal phosphate cofactor; CO(2) is released and the remaining methylamine moiety is then transferred to the lipoamide cofactor of the H protein. The sequence is that of Probable glycine dehydrogenase (decarboxylating) subunit 2 from Thermus thermophilus (strain ATCC 27634 / DSM 579 / HB8).